Reading from the N-terminus, the 92-residue chain is Small ribosomal subunit protein uS19 (92 aa).

The protein belongs to the universal ribosomal protein uS19 family.

Its function is as follows. Protein S19 forms a complex with S13 that binds strongly to the 16S ribosomal RNA. The polypeptide is Small ribosomal subunit protein uS19 (Thermosynechococcus vestitus (strain NIES-2133 / IAM M-273 / BP-1)).